The primary structure comprises 444 residues: Type VII secretion system protein EssB (444 aa).

Over Met-1–Trp-229 the chain is Cytoplasmic. Residues Val-230 to Phe-250 traverse the membrane as a helical segment. At Ser-251–Lys-444 the chain is on the extracellular side. Residues Lys-366–Lys-444 are disordered. Basic and acidic residues predominate over residues Ser-372 to Lys-444. Positions Leu-387–Lys-443 form a coiled coil.

The protein belongs to the EssB family. In terms of assembly, may oligomerize and interact with other membrane components to form the Ess system. Interacts with EsaA.

It is found in the cell membrane. Functionally, component of the type VII secretion system (Ess). Required for the secretion of EsxA and proper accumulation of EssB and EssD. This chain is Type VII secretion system protein EssB, found in Staphylococcus aureus (strain USA300).